A 356-amino-acid chain; its full sequence is Peptide chain release factor 1 (356 aa).

Gln233 carries the N5-methylglutamine modification.

Belongs to the prokaryotic/mitochondrial release factor family. In terms of processing, methylated by PrmC. Methylation increases the termination efficiency of RF1.

It is found in the cytoplasm. Functionally, peptide chain release factor 1 directs the termination of translation in response to the peptide chain termination codons UAG and UAA. The protein is Peptide chain release factor 1 (prfA) of Bacillus subtilis (strain 168).